A 106-amino-acid polypeptide reads, in one-letter code: ATP-dependent Clp protease adapter protein ClpS (106 aa).

Residues 1 to 20 (MKVDMSTSVKDDAQLEASRV) are disordered.

Belongs to the ClpS family. In terms of assembly, binds to the N-terminal domain of the chaperone ClpA.

Functionally, involved in the modulation of the specificity of the ClpAP-mediated ATP-dependent protein degradation. The polypeptide is ATP-dependent Clp protease adapter protein ClpS (Chromobacterium violaceum (strain ATCC 12472 / DSM 30191 / JCM 1249 / CCUG 213 / NBRC 12614 / NCIMB 9131 / NCTC 9757 / MK)).